We begin with the raw amino-acid sequence, 173 residues long: Ferritin-1 heavy chain (173 aa).

In terms of domain architecture, Ferritin-like diiron spans 6–155; that stretch reads QNYHEECEAG…DYITNLIRVG (150 aa). Positions 23, 58, 61, 103, and 137 each coordinate Fe cation.

The protein belongs to the ferritin family. In terms of assembly, oligomer of 24 subunits. The functional molecule forms a roughly spherical shell with a diameter of 12 nm and contains a central cavity into which the insoluble mineral iron core is deposited.

It catalyses the reaction 4 Fe(2+) + O2 + 4 H(+) = 4 Fe(3+) + 2 H2O. Its function is as follows. Stores iron in a soluble, non-toxic, readily available form. Important for iron homeostasis. Has ferroxidase activity. Iron is taken up in the ferrous form and deposited as ferric hydroxides after oxidation. The chain is Ferritin-1 heavy chain (SCM-1) from Schistosoma mansoni (Blood fluke).